A 100-amino-acid chain; its full sequence is Large ribosomal subunit protein uL23 (100 aa).

This sequence belongs to the universal ribosomal protein uL23 family. In terms of assembly, part of the 50S ribosomal subunit. Contacts protein L29, and trigger factor when it is bound to the ribosome.

One of the early assembly proteins it binds 23S rRNA. One of the proteins that surrounds the polypeptide exit tunnel on the outside of the ribosome. Forms the main docking site for trigger factor binding to the ribosome. The chain is Large ribosomal subunit protein uL23 from Xylella fastidiosa (strain 9a5c).